A 75-amino-acid polypeptide reads, in one-letter code: RNA-binding protein KhpA (75 aa).

One can recognise a KH domain in the interval 29-75; sequence KKVYEIVVNEEDVGQVIGKDGRTIKSLKILLSALMGDSKEITIKVVR.

The protein belongs to the KhpA RNA-binding protein family. As to quaternary structure, forms a complex with KhpB.

The protein localises to the cytoplasm. In terms of biological role, a probable RNA chaperone. Forms a complex with KhpB which binds to cellular RNA and controls its expression. Plays a role in peptidoglycan (PG) homeostasis and cell length regulation. In Thermotoga maritima (strain ATCC 43589 / DSM 3109 / JCM 10099 / NBRC 100826 / MSB8), this protein is RNA-binding protein KhpA.